Reading from the N-terminus, the 452-residue chain is Probable phosphoglucosamine mutase (452 aa).

Ser96 functions as the Phosphoserine intermediate in the catalytic mechanism. Ser96, Asp235, Asp237, and Asp239 together coordinate Mg(2+). Phosphoserine is present on Ser96.

This sequence belongs to the phosphohexose mutase family. The cofactor is Mg(2+). Activated by phosphorylation.

The enzyme catalyses alpha-D-glucosamine 1-phosphate = D-glucosamine 6-phosphate. Its function is as follows. Catalyzes the conversion of glucosamine-6-phosphate to glucosamine-1-phosphate. This chain is Probable phosphoglucosamine mutase, found in Methanopyrus kandleri (strain AV19 / DSM 6324 / JCM 9639 / NBRC 100938).